Here is a 154-residue protein sequence, read N- to C-terminus: 6,7-dimethyl-8-ribityllumazine synthase (154 aa).

5-amino-6-(D-ribitylamino)uracil contacts are provided by residues phenylalanine 22, 56–58 (SFE), and 80–82 (AVI). Residue 85–86 (ST) participates in (2S)-2-hydroxy-3-oxobutyl phosphate binding. Histidine 88 (proton donor) is an active-site residue. Residue tyrosine 113 participates in 5-amino-6-(D-ribitylamino)uracil binding. Arginine 127 lines the (2S)-2-hydroxy-3-oxobutyl phosphate pocket.

The protein belongs to the DMRL synthase family. In terms of assembly, forms an icosahedral capsid composed of 60 subunits, arranged as a dodecamer of pentamers.

It catalyses the reaction (2S)-2-hydroxy-3-oxobutyl phosphate + 5-amino-6-(D-ribitylamino)uracil = 6,7-dimethyl-8-(1-D-ribityl)lumazine + phosphate + 2 H2O + H(+). Its pathway is cofactor biosynthesis; riboflavin biosynthesis; riboflavin from 2-hydroxy-3-oxobutyl phosphate and 5-amino-6-(D-ribitylamino)uracil: step 1/2. In terms of biological role, catalyzes the formation of 6,7-dimethyl-8-ribityllumazine by condensation of 5-amino-6-(D-ribitylamino)uracil with 3,4-dihydroxy-2-butanone 4-phosphate. This is the penultimate step in the biosynthesis of riboflavin. The chain is 6,7-dimethyl-8-ribityllumazine synthase from Persephonella marina (strain DSM 14350 / EX-H1).